An 830-amino-acid chain; its full sequence is Leucine--tRNA ligase (830 aa).

The short motif at 48–58 is the 'HIGH' region element; it reads PYPSGAIHMGH. The short motif at 596 to 600 is the 'KMSKS' region element; it reads KMSKS. K599 is a binding site for ATP.

The protein belongs to the class-I aminoacyl-tRNA synthetase family.

The protein resides in the cytoplasm. The catalysed reaction is tRNA(Leu) + L-leucine + ATP = L-leucyl-tRNA(Leu) + AMP + diphosphate. The sequence is that of Leucine--tRNA ligase from Helicobacter hepaticus (strain ATCC 51449 / 3B1).